A 599-amino-acid polypeptide reads, in one-letter code: Protein ECM25 (599 aa).

The Rho-GAP domain occupies 181–359; that stretch reads NRLTPLAIRQ…NLLDFFPEIA (179 aa). Disordered regions lie at residues 362-447, 468-495, and 543-563; these read ISSP…PLPI, ASSSTDTLSSPTKTPSADSLPLSNSSTD, and ELQEKKKKNETTSKTADKFSQ. Composition is skewed to low complexity over residues 363–373, 396–413, and 468–483; these read SSPPSSVSSSS, TLPRSRSPSPQRSVTSPT, and ASSSTDTLSSPTKTPS. Residues 543–562 show a composition bias toward basic and acidic residues; that stretch reads ELQEKKKKNETTSKTADKFS.

Its subcellular location is the cytoplasm. Functionally, may be involved in cell wall organization and biogenesis. The sequence is that of Protein ECM25 (ECM25) from Saccharomyces cerevisiae (strain ATCC 204508 / S288c) (Baker's yeast).